A 905-amino-acid chain; its full sequence is Protein translocase subunit SecA (905 aa).

ATP-binding positions include Gln89, 107–111, and Asp502; that span reads GEGKT. The tract at residues 837–885 is disordered; sequence EQTDVGDPILNDQNKKNSSTLWTPSQENKFVNPKDRNPSDSTTWGKVGR. The span at 852–865 shows a compositional bias: polar residues; the sequence is KNSSTLWTPSQENK. Residues Cys889, Cys891, Cys900, and His901 each contribute to the Zn(2+) site.

The protein belongs to the SecA family. Monomer and homodimer. Part of the essential Sec protein translocation apparatus which comprises SecA, SecYEG and auxiliary proteins SecDF-YajC and YidC. Requires Zn(2+) as cofactor.

The protein resides in the cell inner membrane. Its subcellular location is the cytoplasm. It catalyses the reaction ATP + H2O + cellular proteinSide 1 = ADP + phosphate + cellular proteinSide 2.. Its function is as follows. Part of the Sec protein translocase complex. Interacts with the SecYEG preprotein conducting channel. Has a central role in coupling the hydrolysis of ATP to the transfer of proteins into and across the cell membrane, serving both as a receptor for the preprotein-SecB complex and as an ATP-driven molecular motor driving the stepwise translocation of polypeptide chains across the membrane. This is Protein translocase subunit SecA from Bartonella henselae (strain ATCC 49882 / DSM 28221 / CCUG 30454 / Houston 1) (Rochalimaea henselae).